A 342-amino-acid polypeptide reads, in one-letter code: Anthranilate phosphoribosyltransferase (342 aa).

Residues Gly-90, 93–94 (GS), Thr-98, 100–103 (NIST), 118–126 (KHGNRRATS), and Ser-130 contribute to the 5-phospho-alpha-D-ribose 1-diphosphate site. Position 90 (Gly-90) interacts with anthranilate. Residue Ser-102 participates in Mg(2+) binding. An anthranilate-binding site is contributed by Asn-121. Arg-176 provides a ligand contact to anthranilate. The Mg(2+) site is built by Asp-235 and Glu-236.

Belongs to the anthranilate phosphoribosyltransferase family. In terms of assembly, homodimer. Mg(2+) serves as cofactor.

The catalysed reaction is N-(5-phospho-beta-D-ribosyl)anthranilate + diphosphate = 5-phospho-alpha-D-ribose 1-diphosphate + anthranilate. The protein operates within amino-acid biosynthesis; L-tryptophan biosynthesis; L-tryptophan from chorismate: step 2/5. In terms of biological role, catalyzes the transfer of the phosphoribosyl group of 5-phosphorylribose-1-pyrophosphate (PRPP) to anthranilate to yield N-(5'-phosphoribosyl)-anthranilate (PRA). This chain is Anthranilate phosphoribosyltransferase, found in Rhodopirellula baltica (strain DSM 10527 / NCIMB 13988 / SH1).